The chain runs to 534 residues: Phosphoenolpyruvate carboxykinase (ATP) (534 aa).

Residues Arg59, Tyr200, and Lys206 each contribute to the substrate site. Residues Lys206, His225, and 242-250 each bind ATP; that span reads GLSGTGKTT. Residues Lys206 and His225 each contribute to the Mn(2+) site. Asp263 serves as a coordination point for Mn(2+). ATP is bound by residues Glu291, Arg327, 443–444, and Thr449; that span reads RI. Residue Arg327 coordinates substrate.

It belongs to the phosphoenolpyruvate carboxykinase (ATP) family. Mn(2+) serves as cofactor.

Its subcellular location is the cytoplasm. The catalysed reaction is oxaloacetate + ATP = phosphoenolpyruvate + ADP + CO2. It participates in carbohydrate biosynthesis; gluconeogenesis. Functionally, involved in the gluconeogenesis. Catalyzes the conversion of oxaloacetate (OAA) to phosphoenolpyruvate (PEP) through direct phosphoryl transfer between the nucleoside triphosphate and OAA. The sequence is that of Phosphoenolpyruvate carboxykinase (ATP) from Agathobacter rectalis (strain ATCC 33656 / DSM 3377 / JCM 17463 / KCTC 5835 / VPI 0990) (Eubacterium rectale).